We begin with the raw amino-acid sequence, 165 residues long: Phosphopantetheine adenylyltransferase (165 aa).

Position 8 (S8) interacts with substrate. ATP is bound by residues 8-9 (SF) and H16. Positions 40, 72, and 86 each coordinate substrate. Residues 87 to 89 (GLR), E97, and 122 to 128 (YSFLSSS) contribute to the ATP site.

Belongs to the bacterial CoaD family. As to quaternary structure, homohexamer. Requires Mg(2+) as cofactor.

It localises to the cytoplasm. It catalyses the reaction (R)-4'-phosphopantetheine + ATP + H(+) = 3'-dephospho-CoA + diphosphate. Its pathway is cofactor biosynthesis; coenzyme A biosynthesis; CoA from (R)-pantothenate: step 4/5. In terms of biological role, reversibly transfers an adenylyl group from ATP to 4'-phosphopantetheine, yielding dephospho-CoA (dPCoA) and pyrophosphate. This is Phosphopantetheine adenylyltransferase from Synechococcus sp. (strain WH7803).